The following is a 380-amino-acid chain: WAT1-related protein At2g37460 (380 aa).

10 helical membrane passes run 16 to 36 (FISMVVLQVGLAGMDILSKAV), 45 to 65 (VLVVYRHAVATIVMAPFAFYF), 71 to 91 (PKMTLMIFFKISLLGLLEPVI), 107 to 127 (FATAMYNVLPAITFVLAYIFG), 142 to 162 (VVGTLATVGGAMIMTLVKGPV), 187 to 207 (GAVLVTIGCFSYACFMILQAI), 216 to 236 (LSLTAWICLMGTIEGTAVALV), 254 to 274 (LTATYSGIVCSALAYYVGGVV), 282 to 302 (FVTAFSPLCMIIVAIMSTIIF), and 306 to 326 (MYLGRVLGAVVICAGLYLVIW). The EamA 1 domain maps to 27-134 (AGMDILSKAV…IFGLERVKLR (108 aa)). Positions 196–325 (FSYACFMILQ…VICAGLYLVI (130 aa)) constitute an EamA 2 domain.

The protein belongs to the drug/metabolite transporter (DMT) superfamily. Plant drug/metabolite exporter (P-DME) (TC 2.A.7.4) family.

It is found in the membrane. This Arabidopsis thaliana (Mouse-ear cress) protein is WAT1-related protein At2g37460.